The following is a 280-amino-acid chain: Putative ABC transporter ATP-binding protein PYRAB03730 (280 aa).

One can recognise an ABC transporter domain in the interval 4 to 244; the sequence is IEVENVSFKY…VEFLERIGIR (241 aa). 38–45 is an ATP binding site; that stretch reads GPSGSGKS.

It belongs to the ABC transporter superfamily.

Its subcellular location is the cell membrane. Its function is as follows. Probably part of an ABC transporter complex. Responsible for energy coupling to the transport system. This Pyrococcus abyssi (strain GE5 / Orsay) protein is Putative ABC transporter ATP-binding protein PYRAB03730.